Here is a 133-residue protein sequence, read N- to C-terminus: Ribosome-binding factor A (133 aa).

The protein belongs to the RbfA family. As to quaternary structure, monomer. Binds 30S ribosomal subunits, but not 50S ribosomal subunits or 70S ribosomes.

The protein localises to the cytoplasm. In terms of biological role, one of several proteins that assist in the late maturation steps of the functional core of the 30S ribosomal subunit. Associates with free 30S ribosomal subunits (but not with 30S subunits that are part of 70S ribosomes or polysomes). Required for efficient processing of 16S rRNA. May interact with the 5'-terminal helix region of 16S rRNA. This Trichormus variabilis (strain ATCC 29413 / PCC 7937) (Anabaena variabilis) protein is Ribosome-binding factor A.